The following is a 1620-amino-acid chain: uncharacterized protein (1620 aa).

A Ubiquitin-like domain is found at 21–96 (IRVTLKTLDD…VHLVDRGPSG (76 aa)). Disordered stretches follow at residues 621–648 (VATT…GTSR), 791–810 (TASS…SQSD), 842–874 (RQFL…SEDA), 950–1016 (QVVS…NPGH), 1219–1260 (RVPG…ADPR), and 1537–1620 (IAST…NNIQ). Residues 799 to 810 (ESVDGVEESQSD) are compositionally biased toward acidic residues. Polar residues predominate over residues 852-871 (PSTSSAPSTSENPPGPSFNS). Positions 1225–1242 (ATRNASQNTTSVNQSTET) are enriched in polar residues. Composition is skewed to low complexity over residues 1537–1556 (IAST…TVST) and 1583–1620 (TSLS…NNIQ).

This is an uncharacterized protein from Caenorhabditis elegans.